We begin with the raw amino-acid sequence, 313 residues long: Protein sprouty homolog 2 (313 aa).

Residues 1–14 are compositionally biased toward polar residues; sequence METRVQHGSGSQAL. 2 disordered regions span residues 1 to 31 and 54 to 146; these read METRVQHGSGSQALLQARRDSGRPHGEPDLR and EYTE…VADG. Basic and acidic residues-rich tracts occupy residues 17–31 and 78–89; these read ARRDSGRPHGEPDLR and KSERPHGLPEHR. Positions 108–131 are enriched in low complexity; that stretch reads SRSISTVSTGSRSSTRTSTSSNSS. Positions 132–141 are enriched in polar residues; that stretch reads EQRLLGSSSG. The SPR domain maps to 175-289; that stretch reads RCEDCGKCKC…CYDRVNRPGC (115 aa).

Belongs to the sprouty family. In terms of tissue distribution, brain and interlimb region.

It localises to the cytoplasm. The protein localises to the membrane. Functionally, acts as an antagonist of FGF-induced retinal lens fiber differentiation. Inhibits TGFB-induced epithelial-to-mesenchymal transition in retinal lens epithelial cells. May play an important role in FGF-mediated patterning of the mid/hindbrain region by acting to modulate the signaling effects of FGF8. The chain is Protein sprouty homolog 2 (SPRY2) from Gallus gallus (Chicken).